We begin with the raw amino-acid sequence, 136 residues long: Active regulator of SIRT1 (136 aa).

Citrulline is present on arginine 7. The interval 13–58 (LAASEAPRDPPGQAKPRGAPVKRPRKTKAIQAQKLRNSAKGKVPKS) is disordered. Phosphoserine is present on serine 84.

This sequence belongs to the AROS family. In terms of assembly, part of the small subunit (SSU) processome, composed of more than 70 proteins and the RNA chaperone small nucleolar RNA (snoRNA) U3. Interacts with RPS19; the interaction is direct and mediates the integration of RPS19 in state post-A1. Interacts with SIRT1. Citrullinated by PADI4. As to expression, widely expressed (at protein level).

It is found in the nucleus. It localises to the nucleolus. Part of the small subunit (SSU) processome, first precursor of the small eukaryotic ribosomal subunit. During the assembly of the SSU processome in the nucleolus, many ribosome biogenesis factors, an RNA chaperone and ribosomal proteins associate with the nascent pre-rRNA and work in concert to generate RNA folding, modifications, rearrangements and cleavage as well as targeted degradation of pre-ribosomal RNA by the RNA exosome. Acts as a chaperone that specifically mediates the integration of RPS19 in state post-A1. Direct regulator of SIRT1. Enhances SIRT1-mediated deacetylation of p53/TP53, thereby participating in inhibition of p53/TP53-mediated transcriptional activity. This Homo sapiens (Human) protein is Active regulator of SIRT1.